The following is a 360-amino-acid chain: Molybdenum import ATP-binding protein ModC (360 aa).

Residues 5–234 enclose the ABC transporter domain; the sequence is VKLHLGYQDF…LDLPLALGDD (230 aa). 32-39 contacts ATP; it reads GHSGSGKT. Residues 295–360 form the Mop domain; the sequence is HSSILNRLPV…AQIKAVAVLA (66 aa).

It belongs to the ABC transporter superfamily. Molybdate importer (TC 3.A.1.8) family. In terms of assembly, the complex is composed of two ATP-binding proteins (ModC), two transmembrane proteins (ModB) and a solute-binding protein (ModA).

It is found in the cell inner membrane. The catalysed reaction is molybdate(out) + ATP + H2O = molybdate(in) + ADP + phosphate + H(+). Functionally, part of the ABC transporter complex ModABC involved in molybdenum import. Responsible for energy coupling to the transport system. The polypeptide is Molybdenum import ATP-binding protein ModC (Pseudomonas fluorescens (strain ATCC BAA-477 / NRRL B-23932 / Pf-5)).